We begin with the raw amino-acid sequence, 317 residues long: Succinate receptor 1 (317 aa).

Topologically, residues 1-27 are extracellular; that stretch reads MAQNLSCENWLALENILKKYYLSAFYG. A glycan (N-linked (GlcNAc...) asparagine) is linked at Asn4. Residues 28-48 form a helical membrane-spanning segment; the sequence is IEFIVGMLGNFTVVFGYLFCM. The Cytoplasmic portion of the chain corresponds to 49 to 55; that stretch reads KNWNSSN. Residues 56 to 76 traverse the membrane as a helical segment; it reads VYLFNLSISDLAFLCTLPMLI. Residues 77–99 are Extracellular-facing; that stretch reads RSYATGNWTYGDVLCISNRYVLH. Cys91 and Cys168 are oxidised to a cystine. The helical transmembrane segment at 100 to 120 threads the bilayer; that stretch reads ANLYTSILFLTFISIDRYLLM. Residues 121–133 are Cytoplasmic-facing; the sequence is KFPFREHILQKKE. Residues 134 to 154 form a helical membrane-spanning segment; the sequence is FAILISLAVWVLVTLEVLPML. Residues 155 to 181 lie on the Extracellular side of the membrane; the sequence is TFITSTPIEKGDSCVDYASSGNPKYSL. A helical membrane pass occupies residues 182-202; it reads IYSLCLTLLGFLIPLSVMCFF. The Cytoplasmic segment spans residues 203–226; that stretch reads YYKMVVFLKKRSQQQATVLSLNKP. A helical membrane pass occupies residues 227–247; the sequence is LRLVVLAVVIFSVLFTPYHIM. The Extracellular segment spans residues 248–276; sequence RNVRIASRLDSWPQGCSQKAIKCLYILTR. A helical transmembrane segment spans residues 277–297; that stretch reads PLAFLNSAVNPIFYFLVGDHF. Over 298–317 the chain is Cytoplasmic; it reads RDMLFSKLRQYFKSLTSFRL.

This sequence belongs to the G-protein coupled receptor 1 family. Expressed in retina.

It localises to the cell membrane. In terms of biological role, g protein-coupled receptor for succinate able to mediate signaling through Gq/GNAQ or Gi/GNAI second messengers depending on the cell type and the processes regulated. Succinate-SUCNR1 signaling serves as a link between metabolic stress, inflammation and energy homeostasisn. In macrophages, plays a range of immune-regulatory roles. During inflammation, succinate-SUCNR1 signaling may act as an anti-inflammatory mediator or boost inflammation depending on the inflammatory status of cells. Hyperpolarizes M2 macrophages versus M1 phenotype through Gq signaling by regulating the transcription of genes involved in immune function. In activated M1 macrophages, plays a pro-inflammatory role in response to LPS. Expressed in dendritic cells, where it is involved in the sensing of immunological danger and enhances immunity. Mediates succinate triggered intracelleular calcium mobilization, induces migratory responses and acts in synergy with Toll-like receptor ligands for the production of proinflammatory cytokines as well as an enhancement of antigen-specific activation of helper T cells. In the small intestine, mediates the activation of tuft cells by dietary succinate and triggers type 2 immunity. In adipocytes, plays an important role in the control of energy metabolism. In response to succinate, controls leptin expression in an AMPK-JNK-CEBPA-dependent as well as circadian clock-regulated manner. In muscle tissue, is expressed in non-muscle cells and coordinates muscle remodeling in response to the succinate produced during exercise training in a paracrine manner. In retina, acts as a mediator of vessel growth during retinal development. In response to succinate, regulates the production of angiogenic factors, including VEGF, by retinal ganglion neurons. The polypeptide is Succinate receptor 1 (Sucnr1) (Rattus norvegicus (Rat)).